Here is a 512-residue protein sequence, read N- to C-terminus: Serine--tRNA ligase, cytoplasmic (512 aa).

At M1 the chain carries N-acetylmethionine. The segment at 9 to 61 (RVDKGGDPALIRETQEKRFKDPGLVDQLVKADSEWRRCRFRADNLNKLKNLCS) is interaction with tRNA. S241 bears the Phosphoserine mark. T271 and R302 together coordinate L-serine. ATP is bound by residues 302-304 (RQE) and 318-321 (VHQF). The residue at position 323 (K323) is an N6-acetyllysine. E325 contacts L-serine. 391–394 (ELVS) is a binding site for ATP. L-serine is bound by residues N427 and T429. The tract at residues 472 to 512 (KPAPIDQEPSKKQKKQHEGSKKKAKEVTLESQLQNMEVTEA) is disordered. Residues 479 to 499 (EPSKKQKKQHEGSKKKAKEVT) show a composition bias toward basic and acidic residues. The Nuclear localization signal signature appears at 482-494 (KKQKKQHEGSKKK). The segment covering 500-512 (LESQLQNMEVTEA) has biased composition (polar residues).

The protein belongs to the class-II aminoacyl-tRNA synthetase family. Type-1 seryl-tRNA synthetase subfamily. Homodimer. The tRNA molecule may bind across the dimer. Interacts with SIRT2. Interacts with METTL6; interaction is required for the tRNA N(3)-methylcytidine methyltransferase activity of METTL6.

It is found in the cytoplasm. It localises to the nucleus. The catalysed reaction is tRNA(Ser) + L-serine + ATP = L-seryl-tRNA(Ser) + AMP + diphosphate + H(+). It carries out the reaction tRNA(Sec) + L-serine + ATP = L-seryl-tRNA(Sec) + AMP + diphosphate + H(+). Its pathway is aminoacyl-tRNA biosynthesis; selenocysteinyl-tRNA(Sec) biosynthesis; L-seryl-tRNA(Sec) from L-serine and tRNA(Sec): step 1/1. Catalyzes the attachment of serine to tRNA(Ser) in a two-step reaction: serine is first activated by ATP to form Ser-AMP and then transferred to the acceptor end of tRNA(Ser). Is probably also able to aminoacylate tRNA(Sec) with serine, to form the misacylated tRNA L-seryl-tRNA(Sec), which will be further converted into selenocysteinyl-tRNA(Sec). In the nucleus, binds to the VEGFA core promoter and prevents MYC binding and transcriptional activation by MYC. Recruits SIRT2 to the VEGFA promoter, promoting deacetylation of histone H4 at 'Lys-16' (H4K16). Thereby, inhibits the production of VEGFA and sprouting angiogenesis mediated by VEGFA. This Cricetulus griseus (Chinese hamster) protein is Serine--tRNA ligase, cytoplasmic (SARS1).